A 303-amino-acid chain; its full sequence is Protein translocase subunit SecF (303 aa).

The next 6 helical transmembrane spans lie at 28 to 48 (SIILSLISFIWIGMYKFNFGI), 140 to 160 (IEAGTMAMLFSFAAIMIYIWV), 164 to 184 (WYFGLGILIALVHDVILALGF), 194 to 214 (LSTIAAVLTIIGYSVNDSVVI), 246 to 266 (ILTVVTTLLANLALVLFGGEA), and 272 to 292 (VLVFFGIIAGTYSSIFISAPI).

It belongs to the SecD/SecF family. SecF subfamily. In terms of assembly, forms a complex with SecD. Part of the essential Sec protein translocation apparatus which comprises SecA, SecYEG and auxiliary proteins SecDF-YajC and YidC.

The protein resides in the cell inner membrane. Its function is as follows. Part of the Sec protein translocase complex. Interacts with the SecYEG preprotein conducting channel. SecDF uses the proton motive force (PMF) to complete protein translocation after the ATP-dependent function of SecA. This is Protein translocase subunit SecF from Rickettsia bellii (strain OSU 85-389).